Consider the following 345-residue polypeptide: Holliday junction branch migration complex subunit RuvB (345 aa).

Residues 4–185 are large ATPase domain (RuvB-L); that stretch reads TDRLIAPSTQ…FGIVSRLEFY (182 aa). ATP-binding positions include Leu-24, Arg-25, Gly-66, Lys-69, Thr-70, Thr-71, 132–134, Arg-175, Tyr-185, and Arg-222; that span reads EDY. Residue Thr-70 coordinates Mg(2+). Positions 186 to 256 are small ATPAse domain (RuvB-S); it reads TADELARIVH…IADAALKMLD (71 aa). The segment at 259 to 345 is head domain (RuvB-H); the sequence is KLGFDVMDRK…KIGTGELWQQ (87 aa). Residues Arg-295, Arg-314, and Arg-319 each contribute to the DNA site.

Belongs to the RuvB family. As to quaternary structure, homohexamer. Forms an RuvA(8)-RuvB(12)-Holliday junction (HJ) complex. HJ DNA is sandwiched between 2 RuvA tetramers; dsDNA enters through RuvA and exits via RuvB. An RuvB hexamer assembles on each DNA strand where it exits the tetramer. Each RuvB hexamer is contacted by two RuvA subunits (via domain III) on 2 adjacent RuvB subunits; this complex drives branch migration. In the full resolvosome a probable DNA-RuvA(4)-RuvB(12)-RuvC(2) complex forms which resolves the HJ.

It is found in the cytoplasm. The enzyme catalyses ATP + H2O = ADP + phosphate + H(+). In terms of biological role, the RuvA-RuvB-RuvC complex processes Holliday junction (HJ) DNA during genetic recombination and DNA repair, while the RuvA-RuvB complex plays an important role in the rescue of blocked DNA replication forks via replication fork reversal (RFR). RuvA specifically binds to HJ cruciform DNA, conferring on it an open structure. The RuvB hexamer acts as an ATP-dependent pump, pulling dsDNA into and through the RuvAB complex. RuvB forms 2 homohexamers on either side of HJ DNA bound by 1 or 2 RuvA tetramers; 4 subunits per hexamer contact DNA at a time. Coordinated motions by a converter formed by DNA-disengaged RuvB subunits stimulates ATP hydrolysis and nucleotide exchange. Immobilization of the converter enables RuvB to convert the ATP-contained energy into a lever motion, pulling 2 nucleotides of DNA out of the RuvA tetramer per ATP hydrolyzed, thus driving DNA branch migration. The RuvB motors rotate together with the DNA substrate, which together with the progressing nucleotide cycle form the mechanistic basis for DNA recombination by continuous HJ branch migration. Branch migration allows RuvC to scan DNA until it finds its consensus sequence, where it cleaves and resolves cruciform DNA. This is Holliday junction branch migration complex subunit RuvB from Methylobacillus flagellatus (strain ATCC 51484 / DSM 6875 / VKM B-1610 / KT).